The chain runs to 395 residues: Phosphoribulokinase, chloroplastic (395 aa).

The transit peptide at 1 to 46 (MAVSTIYSTQALNSTHFLTSSSSSKQVFLYRRQPQTNRRFNTLITC) directs the protein to the chloroplast. A disulfide bond links Cys-61 and Cys-100.

This sequence belongs to the phosphoribulokinase family.

The protein localises to the plastid. Its subcellular location is the chloroplast. The enzyme catalyses D-ribulose 5-phosphate + ATP = D-ribulose 1,5-bisphosphate + ADP + H(+). The protein operates within carbohydrate biosynthesis; Calvin cycle. With respect to regulation, light regulated via thioredoxin by reversible oxidation/reduction of sulfhydryl/disulfide groups. The sequence is that of Phosphoribulokinase, chloroplastic from Arabidopsis thaliana (Mouse-ear cress).